The primary structure comprises 307 residues: UDP-3-O-acyl-N-acetylglucosamine deacetylase (307 aa).

Residues His80, His239, and Asp243 each contribute to the Zn(2+) site. His266 functions as the Proton donor in the catalytic mechanism.

It belongs to the LpxC family. Requires Zn(2+) as cofactor.

It carries out the reaction a UDP-3-O-[(3R)-3-hydroxyacyl]-N-acetyl-alpha-D-glucosamine + H2O = a UDP-3-O-[(3R)-3-hydroxyacyl]-alpha-D-glucosamine + acetate. The protein operates within glycolipid biosynthesis; lipid IV(A) biosynthesis; lipid IV(A) from (3R)-3-hydroxytetradecanoyl-[acyl-carrier-protein] and UDP-N-acetyl-alpha-D-glucosamine: step 2/6. In terms of biological role, catalyzes the hydrolysis of UDP-3-O-myristoyl-N-acetylglucosamine to form UDP-3-O-myristoylglucosamine and acetate, the committed step in lipid A biosynthesis. The polypeptide is UDP-3-O-acyl-N-acetylglucosamine deacetylase (Neisseria meningitidis serogroup C (strain 053442)).